The sequence spans 429 residues: UDP-N-acetylglucosamine 1-carboxyvinyltransferase (429 aa).

Phosphoenolpyruvate is bound at residue Lys-22–Asn-23. Position 102 (Arg-102) interacts with UDP-N-acetyl-alpha-D-glucosamine. The active-site Proton donor is Cys-126. Cys-126 carries the post-translational modification 2-(S-cysteinyl)pyruvic acid O-phosphothioketal. Residues Arg-131–Leu-135, Asp-316, and Ile-338 each bind UDP-N-acetyl-alpha-D-glucosamine.

Belongs to the EPSP synthase family. MurA subfamily.

The protein localises to the cytoplasm. The enzyme catalyses phosphoenolpyruvate + UDP-N-acetyl-alpha-D-glucosamine = UDP-N-acetyl-3-O-(1-carboxyvinyl)-alpha-D-glucosamine + phosphate. It functions in the pathway cell wall biogenesis; peptidoglycan biosynthesis. Functionally, cell wall formation. Adds enolpyruvyl to UDP-N-acetylglucosamine. The chain is UDP-N-acetylglucosamine 1-carboxyvinyltransferase from Rhodopseudomonas palustris (strain TIE-1).